Consider the following 772-residue polypeptide: MQPSVSDSSVYLSSAPTKPIASGSVATGIDSMPSKVDITPCDLLENSKSSAPLFVECNQESLHSIPGSLHLVPDASIERLIEKHGAVNLLRQLAKDVAERDSFISDLKFHFESREYVFRELLREHGLDPVLANTKLSQRHSASFFPSSQEPSIPENPSSLTGEKPHLYARIDSAINEPFTPSDRLSPSSLVPLLKLPALDHAVSSSSSSDLPSDPNSASYIASSKQKASSLKLTSSLKKFYSWTSSSSLQHTRENLHDSTSSLRDHDPSLLSSSKFFRSSPRCSTPSVSSTFVSATSEPEVETYSVSTKNSSSNKNLRSSLSKLLSTSNLNNKPLSLSSTAPSMPSIGSVELGNMIPKETQPPSMRNDWKDYLDNNSKEILDQFGFLQKRPSHDTPLCPEDIKLNQKQTLSFYESNYGLVDDFFGNELDGLNDSPLLLNKKDILLDMKESTRQKNWSLFFQRLYKKYKITDEDTIGLLGISSIGVKGRHGKKRWHKFRELVKNGVPLCYKAKVWLECSGAYQLHSPGYYEELLSRTDEVESASVAQIDMDINRTMAKNVFFGGKGPGIPKLRRILVAYSRHNPHIGYCQGMNVIGAFLLLLYASEEDAFYMLMSIIENVLPPKYFTPDLMTSRADQLVLKSFVKESLPEIYSHLELLGVDLDAISFHWFLSVYTDTLPTNISFRIFDMLFCDGYVCLFRVALTILKSLKQQILACNSSSAIYSFLSDLVQYSFQPDSFIKEAADRWSKLVTEKSIERKRNLAISSLNLAVNY.

Over residues 143-161 the composition is skewed to polar residues; sequence SFFPSSQEPSIPENPSSLT. Disordered stretches follow at residues 143-163 and 275-294; these read SFFPSSQEPSIPENPSSLTGE and KFFRSSPRCSTPSVSSTFVS. The span at 275–291 shows a compositional bias: low complexity; sequence KFFRSSPRCSTPSVSST. Thr-395 bears the Phosphothreonine mark. Positions 504-693 constitute a Rab-GAP TBC domain; that stretch reads GVPLCYKAKV…RIFDMLFCDG (190 aa).

In Schizosaccharomyces pombe (strain 972 / ATCC 24843) (Fission yeast), this protein is TBC domain-containing protein C4G8.04.